Here is a 327-residue protein sequence, read N- to C-terminus: GrpE protein homolog 2, mitochondrial (327 aa).

The N-terminal 39 residues, 1-39 (MLVLRILSRVTRNAGIRSSLSAVTLPARNQTPVFSSRFH), are a transit peptide targeting the mitochondrion. Residues 68-140 (SSSTSPESDE…DSESDDDELS (73 aa)) form a disordered region. 2 stretches are compositionally biased toward basic and acidic residues: residues 75–93 (SDEKKTHTEASKTSEEKPT) and 103–113 (SESKDSVTDSA). Acidic residues predominate over residues 130-140 (SDSESDDDELS).

It belongs to the GrpE family. Probable component of the PAM complex, at least composed of SSC1 (mtHsp70), MGE1, TIM44, PAM16/TIM16, PAM17 and PAM18/TIM14. Interacts with SSQ1.

Its subcellular location is the mitochondrion matrix. In terms of biological role, essential component of the PAM complex, a complex required for the translocation of transit peptide-containing proteins from the inner membrane into the mitochondrial matrix in an ATP-dependent manner. Seems to control the nucleotide-dependent binding of mitochondrial HSP70 to substrate proteins. Binds ATP. Interacts with copper ions Cu(2+). Confers thermotolerance to long-term exposure at moderately high temperature (TMHT at 35 degrees Celsius). This Arabidopsis thaliana (Mouse-ear cress) protein is GrpE protein homolog 2, mitochondrial.